A 511-amino-acid chain; its full sequence is Pentatricopeptide repeat-containing protein At5g08510 (511 aa).

PPR repeat units lie at residues cysteine 46–proline 80, serine 81–serine 115, aspartate 116–arginine 146, aspartate 147–serine 181, tryptophan 182–proline 213, asparagine 214–aspartate 248, asparagine 249–glutamine 279, asparagine 281–proline 315, aspartate 316–valine 346, and lysine 352–lysine 382. The tract at residues valine 387–valine 462 is type E motif. The segment at glycine 463–lysine 494 is type E(+) motif.

The protein belongs to the PPR family. PCMP-E subfamily.

This chain is Pentatricopeptide repeat-containing protein At5g08510 (PCMP-E20), found in Arabidopsis thaliana (Mouse-ear cress).